The chain runs to 580 residues: Alpha-thujene synthase TPS3, chloroplastic (580 aa).

The transit peptide at 1 to 26 (MALQLLTPSFSFQHSPSPHRLTTLRY) directs the protein to the chloroplast. Positions 296, 333, 337, 473, and 476 each coordinate (2E)-geranyl diphosphate. Mg(2+) contacts are provided by Asp333 and Asp337. Residues 333–337 (DDVYD) carry the DDXXD motif motif. The Mg(2+) site is built by Asp476, Thr480, and Glu484.

This sequence belongs to the terpene synthase family. Tpsb subfamily. Monomer. Mg(2+) serves as cofactor. It depends on Mn(2+) as a cofactor. As to expression, mostly expressed in developing and mature fruits, and, to a lower extent, in male leaves. Barely detectable in female leaves and shoots.

It localises to the plastid. The protein localises to the chloroplast. It catalyses the reaction (2E)-geranyl diphosphate = alpha-thujene + diphosphate. It carries out the reaction (2E)-geranyl diphosphate = (1R,5R)-sabinene + diphosphate. It functions in the pathway secondary metabolite biosynthesis; terpenoid biosynthesis. Monoterpene synthase (TPS) involved in the biosynthesis of monoterpene natural products used by traditional Chinese medicine to treat headache, inflammation and intoxication. Catalyzes the conversion of (2E)-geranyl diphosphate (GPP) into alpha-thujene and (1R,5R)-sabinene. The sequence is that of Alpha-thujene synthase TPS3, chloroplastic from Litsea cubeba (Aromatic litsea).